The chain runs to 508 residues: Photosystem II CP47 reaction center protein (508 aa).

6 helical membrane passes run 21–36 (SVHLMHTALVSGWAGS), 101–115 (IVLSGLLFLAAIWHW), 140–156 (GIHLFLSGVLCFGFGAF), 203–218 (IAAGILGILAGLFHLS), 237–252 (VLSSSIAAVFFAAFVV), and 457–472 (TFALIFFFGHIWHGAR).

This sequence belongs to the PsbB/PsbC family. PsbB subfamily. In terms of assembly, PSII is composed of 1 copy each of membrane proteins PsbA, PsbB, PsbC, PsbD, PsbE, PsbF, PsbH, PsbI, PsbJ, PsbK, PsbL, PsbM, PsbT, PsbX, PsbY, PsbZ, Psb30/Ycf12, at least 3 peripheral proteins of the oxygen-evolving complex and a large number of cofactors. It forms dimeric complexes. It depends on Binds multiple chlorophylls. PSII binds additional chlorophylls, carotenoids and specific lipids. as a cofactor.

It localises to the plastid. The protein localises to the chloroplast thylakoid membrane. One of the components of the core complex of photosystem II (PSII). It binds chlorophyll and helps catalyze the primary light-induced photochemical processes of PSII. PSII is a light-driven water:plastoquinone oxidoreductase, using light energy to abstract electrons from H(2)O, generating O(2) and a proton gradient subsequently used for ATP formation. This chain is Photosystem II CP47 reaction center protein, found in Angiopteris evecta (Mule's foot fern).